We begin with the raw amino-acid sequence, 192 residues long: Genome polyprotein (192 aa).

The Cytoplasmic portion of the chain corresponds to 1-52 (RNLGKVIDTLTCGFADLMGYIPLVGAPLGGAARALAHGVRVLEDGVNYATGN). Positions 6-57 (VIDTLTCGFADLMGYIPLVGAPLGGAARALAHGVRVLEDGVNYATGNLPGCS) are interaction with APOA2. Residues 48–51 (YATG) form an important for lipid droplets localization region. A helical transmembrane segment spans residues 53–73 (LPGCSFSIFLLALLSCLTVPA). The propeptide at 62–75 (LLALLSCLTVPASA) is ER anchor for the core protein, removed in mature form by host signal peptidase. Residues 74–192 (SAYQVRNSSG…WTTQGCNCSI (119 aa)) are Lumenal-facing. N-linked (GlcNAc...) asparagine; by host glycosylation is found at asparagine 80, asparagine 93, and asparagine 118. Residues 149-180 (LVGSATLCSALYVGDLCGSVFLVGQLFTFSPR) form an important for fusion region. The N-linked (GlcNAc...) asparagine; by host glycan is linked to asparagine 189.

It belongs to the hepacivirus polyprotein family. As to quaternary structure, homooligomer. Interacts with E1 (via C-terminus). Interacts with the non-structural protein 5A. Interacts (via N-terminus) with host STAT1 (via SH2 domain); this interaction results in decreased STAT1 phosphorylation and ubiquitin-mediated proteasome-dependent STAT1 degradation, leading to decreased IFN-stimulated gene transcription. Interacts with host STAT3; this interaction constitutively activates STAT3. Interacts with host LTBR receptor. Interacts with host TNFRSF1A receptor and possibly induces apoptosis. Interacts with host HNRPK. Interacts with host YWHAE. Interacts with host UBE3A/E6AP. Interacts with host DDX3X. Interacts with host APOA2. Interacts with host RXRA protein. Interacts with host SP110 isoform 3/Sp110b; this interaction sequesters the transcriptional corepressor SP110 away from the nucleus. Interacts with host CREB3 nuclear transcription protein; this interaction triggers cell transformation. Interacts with host ACY3. Interacts with host C1QR1. Interacts with host RBM24; this interaction, which enhances the interaction of the mature core protein with 5'-UTR, may inhibit viral translation and favor replication. Interacts with host EIF2AK2/PKR; this interaction induces the autophosphorylation of EIF2AK2. Part of the viral assembly initiation complex composed of NS2, E1, E2, NS3, NS4A, NS5A and the mature core protein. In terms of assembly, forms a heterodimer with envelope glycoprotein E2. Interacts with mature core protein. Interacts with protease NS2. The heterodimer E1/E2 interacts with host CLDN1; this interaction plays a role in viral entry into host cell. Interacts with host SPSB2 (via C-terminus). Part of the viral assembly initiation complex composed of NS2, E1, E2, NS3, NS4A, NS5A and the mature core protein. In terms of processing, specific enzymatic cleavages in vivo yield mature proteins. The structural proteins, core, E1, E2 and p7 are produced by proteolytic processing by host signal peptidases. The core protein precursor is synthesized as a 23 kDa, which is retained in the ER membrane through the hydrophobic signal peptide. Cleavage by the signal peptidase releases the 21 kDa mature core protein. The cleavage of the core protein precursor occurs between aminoacids 176 and 188 but the exact cleavage site is not known. Some degraded forms of the core protein appear as well during the course of infection. The other proteins (p7, NS2, NS3, NS4A, NS4B, NS5A and NS5B) are cleaved by the viral proteases. Autoprocessing between NS2 and NS3 is mediated by the NS2 cysteine protease catalytic domain and regulated by the NS3 N-terminal domain. Post-translationally, phosphorylated by host PKC and PKA. Ubiquitinated; mediated by UBE3A and leading to core protein subsequent proteasomal degradation. In terms of processing, highly N-glycosylated.

The protein localises to the host endoplasmic reticulum membrane. It localises to the host mitochondrion membrane. Its subcellular location is the virion. It is found in the host cytoplasm. The protein resides in the host nucleus. The protein localises to the host lipid droplet. It localises to the virion membrane. Functionally, packages viral RNA to form a viral nucleocapsid, and promotes virion budding. Participates in the viral particle production as a result of its interaction with the non-structural protein 5A. Binds RNA and may function as a RNA chaperone to induce the RNA structural rearrangements taking place during virus replication. Modulates viral translation initiation by interacting with viral IRES and 40S ribosomal subunit. Affects various cell signaling pathways, host immunity and lipid metabolism. Prevents the establishment of cellular antiviral state by blocking the interferon-alpha/beta (IFN-alpha/beta) and IFN-gamma signaling pathways and by blocking the formation of phosphorylated STAT1 and promoting ubiquitin-mediated proteasome-dependent degradation of STAT1. Activates STAT3 leading to cellular transformation. Regulates the activity of cellular genes, including c-myc and c-fos. May repress the promoter of p53, and sequester CREB3 and SP110 isoform 3/Sp110b in the cytoplasm. Represses cell cycle negative regulating factor CDKN1A, thereby interrupting an important check point of normal cell cycle regulation. Targets transcription factors involved in the regulation of inflammatory responses and in the immune response: suppresses TNF-induced NF-kappa-B activation, and activates AP-1. Binds to dendritic cells (DCs) via C1QR1, resulting in down-regulation of T-lymphocytes proliferation. Alters lipid metabolism by interacting with hepatocellular proteins involved in lipid accumulation and storage. Induces up-regulation of FAS promoter activity, and thereby contributes to the increased triglyceride accumulation in hepatocytes (steatosis). In terms of biological role, forms a heterodimer with envelope glycoprotein E2, which mediates virus attachment to the host cell, virion internalization through clathrin-dependent endocytosis and fusion with host membrane. Fusion with the host cell is most likely mediated by both E1 and E2, through conformational rearrangements of the heterodimer required for fusion rather than a classical class II fusion mechanism. E1/E2 heterodimer binds host apolipoproteins such as APOB and ApoE thereby forming a lipo-viro-particle (LVP). APOE associated to the LVP allows the initial virus attachment to cell surface receptors such as the heparan sulfate proteoglycans (HSPGs), syndecan-1 (SDC1), syndecan-1 (SDC2), the low-density lipoprotein receptor (LDLR) and scavenger receptor class B type I (SCARB1). The cholesterol transfer activity of SCARB1 allows E2 exposure and binding of E2 to SCARB1 and the tetraspanin CD81. E1/E2 heterodimer binding on CD81 activates the epithelial growth factor receptor (EGFR) signaling pathway. Diffusion of the complex E1-E2-EGFR-SCARB1-CD81 to the cell lateral membrane allows further interaction with Claudin 1 (CLDN1) and occludin (OCLN) to finally trigger HCV entry. In Hepatitis C virus (isolate EC1) (HCV), this protein is Genome polyprotein.